Here is a 571-residue protein sequence, read N- to C-terminus: Potassium-transporting ATPase potassium-binding subunit (571 aa).

The next 11 helical transmembrane spans lie at 3–23, 64–84, 135–155, 179–199, 254–274, 284–304, 330–350, 357–376, 421–441, 488–508, and 527–547; these read LIGW…VKPL, LGYG…LYAI, LGLT…AVAL, LYVL…QGMP, LANL…TNVF, GWAI…VTYA, FGIV…CGAV, FTAL…EIIV, MLAI…ATVL, LALG…AIAG, and GGLF…LTFF.

Belongs to the KdpA family. The system is composed of three essential subunits: KdpA, KdpB and KdpC.

The protein localises to the cell inner membrane. Functionally, part of the high-affinity ATP-driven potassium transport (or Kdp) system, which catalyzes the hydrolysis of ATP coupled with the electrogenic transport of potassium into the cytoplasm. This subunit binds the periplasmic potassium ions and delivers the ions to the membrane domain of KdpB through an intramembrane tunnel. This Methylorubrum populi (strain ATCC BAA-705 / NCIMB 13946 / BJ001) (Methylobacterium populi) protein is Potassium-transporting ATPase potassium-binding subunit.